A 129-amino-acid polypeptide reads, in one-letter code: Thyroid hormone receptor alpha (129 aa).

Residues A26 to R129 enclose the NR LBD domain. Residue R91 coordinates 3,3',5-triiodo-L-thyronine.

Belongs to the nuclear hormone receptor family. NR1 subfamily.

The protein localises to the nucleus. Its function is as follows. Nuclear hormone receptor that can act as a repressor or activator of transcription. High affinity receptor for thyroid hormones, including triiodothyronine and thyroxine. The sequence is that of Thyroid hormone receptor alpha (thra1) from Sparus aurata (Gilthead sea bream).